Reading from the N-terminus, the 217-residue chain is Thiopurine S-methyltransferase (217 aa).

S-adenosyl-L-methionine-binding residues include tryptophan 11, leucine 46, glutamate 67, and arginine 122.

This sequence belongs to the class I-like SAM-binding methyltransferase superfamily. TPMT family.

The protein localises to the cytoplasm. It catalyses the reaction S-adenosyl-L-methionine + a thiopurine = S-adenosyl-L-homocysteine + a thiopurine S-methylether.. The polypeptide is Thiopurine S-methyltransferase (Vibrio vulnificus (strain YJ016)).